A 626-amino-acid polypeptide reads, in one-letter code: Glyco-Gag protein (626 aa).

The Cytoplasmic portion of the chain corresponds to 1–67 (LGDVPGTSGA…VWSRSRAARP (67 aa)). Residues 68 to 86 (VCCSIVLCCFCLTVFLYLS) traverse the membrane as a helical segment. Topologically, residues 87 to 626 (ENMGQTATTP…PQASLLTLDD (540 aa)) are extracellular. N-linked (GlcNAc...) asparagine; by host glycosylation is present at asparagine 113. 2 stretches are compositionally biased toward pro residues: residues 199-212 (PSAP…PLST) and 249-261 (DPPP…PPSP). The tract at residues 199–306 (PSAPSLPPEP…STTSQAFPLR (108 aa)) is disordered. Asparagine 480 is a glycosylation site (N-linked (GlcNAc...) asparagine; by host). Composition is skewed to basic and acidic residues over residues 522-554 (RETP…EKER) and 574-607 (RQDR…DCPK). The segment at 522–626 (RETPEEREER…PQASLLTLDD (105 aa)) is disordered. The segment at 590-607 (DQCAYCKEKGHWARDCPK) adopts a CCHC-type zinc-finger fold.

In terms of processing, glycosylated by host. Cleaved by host near the middle of the molecule, releasing the c-terminal half containing capsid and nucleoprotein domains op GAG.

The protein resides in the host cell membrane. Its function is as follows. Plays a role in viral particle release. Presumably acts by facilitating the fission of the virion bud at the cell surface. May prevent the antiviral activity of murine APOBEC3. This is Glyco-Gag protein from Mus musculus (Mouse).